A 37-amino-acid chain; its full sequence is Large ribosomal subunit protein bL36 (37 aa).

The protein belongs to the bacterial ribosomal protein bL36 family.

The chain is Large ribosomal subunit protein bL36 from Thermosynechococcus vestitus (strain NIES-2133 / IAM M-273 / BP-1).